Consider the following 445-residue polypeptide: Chromosomal replication initiator protein DnaA (445 aa).

Positions 1 to 72 (MSGIDTIWEK…QEAFIEEIGE (72 aa)) are domain I, interacts with DnaA modulators. A domain II region spans residues 72–107 (EKLNIKVISSEDELMNNEKEAPVRKTQQTSQELLPN). A domain III, AAA+ region region spans residues 108-324 (QLNTDNTFDT…GALTRVSAYS (217 aa)). 4 residues coordinate ATP: glycine 152, glycine 154, lysine 155, and threonine 156. The domain IV, binds dsDNA stretch occupies residues 325–445 (KLVNRELNSD…LKNIEKDITS (121 aa)).

The protein belongs to the DnaA family. Oligomerizes as a right-handed, spiral filament on DNA at oriC.

It is found in the cytoplasm. Functionally, plays an essential role in the initiation and regulation of chromosomal replication. ATP-DnaA binds to the origin of replication (oriC) to initiate formation of the DNA replication initiation complex once per cell cycle. Binds the DnaA box (a 9 base pair repeat at the origin) and separates the double-stranded (ds)DNA. Forms a right-handed helical filament on oriC DNA; dsDNA binds to the exterior of the filament while single-stranded (ss)DNA is stabiized in the filament's interior. The ATP-DnaA-oriC complex binds and stabilizes one strand of the AT-rich DNA unwinding element (DUE), permitting loading of DNA polymerase. After initiation quickly degrades to an ADP-DnaA complex that is not apt for DNA replication. Binds acidic phospholipids. This Macrococcus caseolyticus (strain JCSC5402) (Macrococcoides caseolyticum) protein is Chromosomal replication initiator protein DnaA.